Reading from the N-terminus, the 436-residue chain is G2/mitotic-specific cyclin-B (436 aa).

Residues 1-17 (MSTINNPLNIKTRSHSS) show a composition bias toward polar residues. The interval 1 to 33 (MSTINNPLNIKTRSHSSMGGGMIMDENKVPKSS) is disordered.

Belongs to the cyclin family. Cyclin AB subfamily. Interacts with the cdk1 protein kinase to form a serine/threonine kinase holoenzyme complex also known as maturation promoting factor (MPF). The cyclin subunit imparts substrate specificity to the complex.

In terms of biological role, essential for the control of the cell cycle at the G2/M (mitosis) transition. This Dictyostelium discoideum (Social amoeba) protein is G2/mitotic-specific cyclin-B (cycB).